A 384-amino-acid chain; its full sequence is MAP kinase-activated protein kinase 3 (384 aa).

Met-1 bears the N-acetylmethionine mark. The segment at 1-33 (MDGETAGEKGSLVPPPGALGGSALGGAPAPGVR) is disordered. A Protein kinase domain is found at 46–306 (QLSKQVLGLG…IMQFMNHPWI (261 aa)). Residues 52–60 (LGLGVNGKV) and Lys-75 contribute to the ATP site. Asp-168 (proton acceptor) is an active-site residue. Thr-203 is subject to Phosphothreonine; by MAPK14. At Ser-253 the chain carries Phosphoserine; by MAPK14. The residue at position 309 (Ser-309) is a Phosphoserine; by autocatalysis. The autoinhibitory helix stretch occupies residues 309-345 (SMVVPQTPLYTARVLQEDKDHWDDVKEEMTSALATMR). Phosphothreonine; by MAPK14 is present on Thr-315. Residues 337-346 (MTSALATMRV) carry the Nuclear export signal (NES) motif. Residues 347–371 (DYDQVKIKDLKTSNNRLLNKRRKKQ) are p38 MAPK-binding site. Short sequence motifs (bipartite nuclear localization signal) lie at residues 352–355 (KIKD) and 366–370 (KRRKK). The segment at 359–384 (SNNRLLNKRRKKQAGSSSASQGCNNQ) is disordered. Polar residues predominate over residues 372–384 (AGSSSASQGCNNQ).

This sequence belongs to the protein kinase superfamily. CAMK Ser/Thr protein kinase family. Heterodimer with p38-alpha/MAPK14. The heterodimer with p38-alpha/MAPK14 forms a stable complex: molecules are positioned 'face to face' so that the ATP-binding sites of both kinases are at the heterodimer interface. Interacts with TCF3 and with polycomb proteins, such as PCH2 and BMI1/PCGF4. Phosphorylated and activated by MAPK1/ERK2 and MAPK3/ERK1. Phosphorylated and activated by MAP kinase p38-alpha/MAPK14 at Thr-201, Ser-251 and Thr-313. Isoform 3 is degraded following phosphorylation at Thr-203. In terms of tissue distribution, ubiquitously expressed (at protein level). Isoform 3 is expressed in skeletal muscles and heart.

Its subcellular location is the nucleus. It localises to the cytoplasm. The catalysed reaction is L-seryl-[protein] + ATP = O-phospho-L-seryl-[protein] + ADP + H(+). The enzyme catalyses L-threonyl-[protein] + ATP = O-phospho-L-threonyl-[protein] + ADP + H(+). With respect to regulation, activated following phosphorylation by p38-alpha/MAPK14 following various stresses. Inhibited by ligand 5B (2'-[2-(1,3-benzodioxol-5-yl)pyrimidin-4-yl]-5',6'-dihydrospiro[piperidine-4,7'-pyrrolo[3,2-c]pyridin]- 4'(1'h)-one) and ligand P4O (2-[2-(2-fluorophenyl)pyridin-4-yl]-1,5,6,7-tetrahydro- 4h-pyrrolo[3,2-c]pyridin-4-one), 2 ATP-competitive inhibitors. Stress-activated serine/threonine-protein kinase involved in cytokines production, endocytosis, cell migration, chromatin remodeling and transcriptional regulation. Following stress, it is phosphorylated and activated by MAP kinase p38-alpha/MAPK14, leading to phosphorylation of substrates. Phosphorylates serine in the peptide sequence, Hyd-X-R-X(2)-S, where Hyd is a large hydrophobic residue. MAPKAPK2 and MAPKAPK3, share the same function and substrate specificity, but MAPKAPK3 kinase activity and level in protein expression are lower compared to MAPKAPK2. Phosphorylates HSP27/HSPB1, KRT18, KRT20, RCSD1, RPS6KA3, TAB3 and TTP/ZFP36. Mediates phosphorylation of HSP27/HSPB1 in response to stress, leading to dissociate HSP27/HSPB1 from large small heat-shock protein (sHsps) oligomers and impair their chaperone activities and ability to protect against oxidative stress effectively. Involved in inflammatory response by regulating tumor necrosis factor (TNF) and IL6 production post-transcriptionally: acts by phosphorylating AU-rich elements (AREs)-binding proteins, such as TTP/ZFP36, leading to regulate the stability and translation of TNF and IL6 mRNAs. Phosphorylation of TTP/ZFP36, a major post-transcriptional regulator of TNF, promotes its binding to 14-3-3 proteins and reduces its ARE mRNA affinity leading to inhibition of dependent degradation of ARE-containing transcript. Involved in toll-like receptor signaling pathway (TLR) in dendritic cells: required for acute TLR-induced macropinocytosis by phosphorylating and activating RPS6KA3. Also acts as a modulator of Polycomb-mediated repression. This Mus musculus (Mouse) protein is MAP kinase-activated protein kinase 3 (Mapkapk3).